The sequence spans 739 residues: DNA ligase (739 aa).

Positions 1-29 (MTANRPALPTRDKAVSDLSATEASDEHAA) are disordered. NAD(+) is bound by residues 51–55 (DADYD), 100–101 (SL), and glutamate 134. Lysine 136 acts as the N6-AMP-lysine intermediate in catalysis. Residues arginine 157, glutamate 194, lysine 311, and lysine 335 each coordinate NAD(+). Positions 440, 443, 464, and 470 each coordinate Zn(2+). The segment at 592–612 (PTEMEEASEETPPTRRRKPQG) is disordered. In terms of domain architecture, BRCT spans 662-739 (ASTSPVSGKT…TEDEWFDLVG (78 aa)).

It belongs to the NAD-dependent DNA ligase family. LigA subfamily. The cofactor is Mg(2+). It depends on Mn(2+) as a cofactor.

It carries out the reaction NAD(+) + (deoxyribonucleotide)n-3'-hydroxyl + 5'-phospho-(deoxyribonucleotide)m = (deoxyribonucleotide)n+m + AMP + beta-nicotinamide D-nucleotide.. Its function is as follows. DNA ligase that catalyzes the formation of phosphodiester linkages between 5'-phosphoryl and 3'-hydroxyl groups in double-stranded DNA using NAD as a coenzyme and as the energy source for the reaction. It is essential for DNA replication and repair of damaged DNA. In Azorhizobium caulinodans (strain ATCC 43989 / DSM 5975 / JCM 20966 / LMG 6465 / NBRC 14845 / NCIMB 13405 / ORS 571), this protein is DNA ligase.